Consider the following 97-residue polypeptide: MSKLIKLTSITAVSSTLAASYYFYFVDRDGFHYQNSQWKKIGDKVQGIIDGSENINPSTPSNSNQVIVVKRPMTETMKDLWNEQIRNTANWFYSWGK.

Residues 7-24 (LTSITAVSSTLAASYYFY) form a helical membrane-spanning segment.

Belongs to the MICOS complex subunit Mic12 family. As to quaternary structure, component of the mitochondrial contact site and cristae organizing system (MICOS) complex.

It is found in the mitochondrion inner membrane. Component of the MICOS complex, a large protein complex of the mitochondrial inner membrane that plays crucial roles in the maintenance of crista junctions, inner membrane architecture, and formation of contact sites to the outer membrane. The protein is MICOS complex subunit MIC12 (AIM5) of Zygosaccharomyces rouxii (strain ATCC 2623 / CBS 732 / NBRC 1130 / NCYC 568 / NRRL Y-229).